A 180-amino-acid chain; its full sequence is Adenine phosphoribosyltransferase (180 aa).

Belongs to the purine/pyrimidine phosphoribosyltransferase family. As to quaternary structure, homodimer.

The protein localises to the cytoplasm. It carries out the reaction AMP + diphosphate = 5-phospho-alpha-D-ribose 1-diphosphate + adenine. Its pathway is purine metabolism; AMP biosynthesis via salvage pathway; AMP from adenine: step 1/1. Catalyzes a salvage reaction resulting in the formation of AMP, that is energically less costly than de novo synthesis. The protein is Adenine phosphoribosyltransferase of Sinorhizobium medicae (strain WSM419) (Ensifer medicae).